A 415-amino-acid chain; its full sequence is Plant UBX domain-containing protein 16 (415 aa).

In terms of domain architecture, UBA spans 19–69 (QLDEEIVLFRQDQLISSFLEIAVDQTAETARILLQTTDWNIDQAVNLFLTN). The UBX domain occupies 333–413 (DRSVVCSLCV…GLANSLISVT (81 aa)).

In Arabidopsis thaliana (Mouse-ear cress), this protein is Plant UBX domain-containing protein 16.